Reading from the N-terminus, the 342-residue chain is Serine/threonine-protein kinase SAPK1 (342 aa).

The region spanning 4–260 (YEVMRDIGSG…IPEIKNHPWF (257 aa)) is the Protein kinase domain. Residues 10 to 18 (IGSGNFGVA) and Lys-33 each bind ATP. Asp-123 functions as the Proton acceptor in the catalytic mechanism. The segment at 253–342 (EIKNHPWFLK…ENSGDFVCAL (90 aa)) is C-terminal.

Belongs to the protein kinase superfamily. Ser/Thr protein kinase family. Post-translationally, phosphorylated. As to expression, expressed in leaf blades, leaf sheaths and roots. Expressed in shoots and roots of young seedlings.

The catalysed reaction is L-seryl-[protein] + ATP = O-phospho-L-seryl-[protein] + ADP + H(+). It carries out the reaction L-threonyl-[protein] + ATP = O-phospho-L-threonyl-[protein] + ADP + H(+). Activated by phosphorylation in response to hyperosmotic stress within 5 minutes. Functionally, may play a role in signal transduction of hyperosmotic response. The chain is Serine/threonine-protein kinase SAPK1 (SAPK1) from Oryza sativa subsp. japonica (Rice).